We begin with the raw amino-acid sequence, 144 residues long: Group IID secretory phospholipase A2 (144 aa).

The signal sequence occupies residues 1–19 (MRLALLCGLLLAGITATQG). Intrachain disulfides connect C45–C137, C47–C63, C62–C117, C68–C144, C69–C110, C78–C103, and C96–C108. Residues H46, G48, and G50 each coordinate Ca(2+). H66 is an active-site residue. D67 contributes to the Ca(2+) binding site. N-linked (GlcNAc...) asparagine glycosylation is present at N99. The active site involves D111.

Belongs to the phospholipase A2 family. Ca(2+) is required as a cofactor. Highly expressed in secondary lymphoid tissues, spleen and lymph nodes. Expressed at a lesser extent in thymus. Expressed in CD4-positive, IL2RA/CD25-positive, FOXP3-positive Tregs (at protein level). Expressed in myeloid cell subsets resident in spleen and lymph nodes, ITGAX/CD11C-positive dendritic cells and macrophages (at protein level). Enriched in CD4-positive, ITGAM/CD11B-positive dendritic cell subset. Expressed in pulmonary ITGAX/CD11C-positive dendritic cell subset (at protein level).

Its subcellular location is the secreted. It is found in the cell membrane. It localises to the cytoplasm. The enzyme catalyses a 1,2-diacyl-sn-glycero-3-phosphoethanolamine + H2O = a 1-acyl-sn-glycero-3-phosphoethanolamine + a fatty acid + H(+). The catalysed reaction is 1-hexadecanoyl-2-(9Z-octadecenoyl)-sn-glycero-3-phosphoethanolamine + H2O = 1-hexadecanoyl-sn-glycero-3-phosphoethanolamine + (9Z)-octadecenoate + H(+). It carries out the reaction 1-hexadecanoyl-2-(9Z,12Z-octadecadienoyl)-sn-glycero-3-phosphoethanolamine + H2O = 1-hexadecanoyl-sn-glycero-3-phosphoethanolamine + (9Z,12Z)-octadecadienoate + H(+). It catalyses the reaction 1,2-dihexadecanoyl-sn-glycero-3-phospho-(1'-sn-glycerol) + H2O = 1-hexadecanoyl-sn-glycero-3-phospho-(1'-sn-glycerol) + hexadecanoate + H(+). The enzyme catalyses 1-hexadecanoyl-2-(9Z-octadecenoyl)-sn-glycero-3-phospho-(1'-sn-glycerol) + H2O = 1-hexadecanoyl-sn-glycero-3-phospho-(1'-sn-glycerol) + (9Z)-octadecenoate + H(+). The catalysed reaction is a 1,2-diacyl-sn-glycero-3-phosphocholine + H2O = a 1-acyl-sn-glycero-3-phosphocholine + a fatty acid + H(+). It carries out the reaction 1,2-dihexadecanoyl-sn-glycero-3-phosphocholine + H2O = 1-hexadecanoyl-sn-glycero-3-phosphocholine + hexadecanoate + H(+). It catalyses the reaction 1-hexadecanoyl-2-(9Z-octadecenoyl)-sn-glycero-3-phosphocholine + H2O = 1-hexadecanoyl-sn-glycero-3-phosphocholine + (9Z)-octadecenoate + H(+). The enzyme catalyses 1-hexadecanoyl-2-(9Z,12Z-octadecadienoyl)-sn-glycero-3-phosphocholine + H2O = (9Z,12Z)-octadecadienoate + 1-hexadecanoyl-sn-glycero-3-phosphocholine + H(+). The catalysed reaction is 1-hexadecanoyl-2-(4Z,7Z,10Z,13Z,16Z,19Z-docosahexaenoyl)-sn-glycero-3-phosphocholine + H2O = (4Z,7Z,10Z,13Z,16Z,19Z)-docosahexaenoate + 1-hexadecanoyl-sn-glycero-3-phosphocholine + H(+). Functionally, secretory calcium-dependent phospholipase A2 that primarily targets extracellular lipids, exerting anti-inflammatory and immunosuppressive functions. Hydrolyzes the ester bond of the fatty acyl group attached at sn-2 position of phospholipids (phospholipase A2 activity) with preference for phosphatidylethanolamines and phosphatidylglycerols over phosphatidylcholines. In draining lymph nodes, selectively hydrolyzes diacyl and alkenyl forms of phosphatidylethanolamines, releasing omega-3 polyunsaturated fatty acids (PUFAs) such as eicosapentaenoate and docosahexaenoate that are precursors of the anti-inflammatory lipid mediators, resolvins. During the resolution phase of acute inflammation drives docosahexaenoate-derived resolvin D1 synthesis, which suppresses dendritic cell activation and T-helper 1 immune response. May act in an autocrine and paracrine manner. Via a mechanism independent of its catalytic activity, promotes differentiation of regulatory T cells (Tregs) and participates in the maintenance of immune tolerance. May contribute to lipid remodeling of cellular membranes and generation of lipid mediators involved in pathogen clearance. Displays bactericidal activity against Gram-positive bacteria by directly hydrolyzing phospholipids of the bacterial membrane. The protein is Group IID secretory phospholipase A2 (Pla2g2d) of Mus musculus (Mouse).